Here is a 206-residue protein sequence, read N- to C-terminus: MADLSPVIQPHREGGSRYGYTMFPGLESEAELSLSLASTKTRSYGSTGSVAAPLAERYIEHCLSPSDTLQGIALKYGVTMEQIKRANKLFSTDCIFLRKSLNIPVISKKGSLFNGLGSLDSPENETQDTCSSPTEEPALAESHTVSIDSSAKTNQPIVRSDEELSAKDFLQRLDLQIKRSTQAAQRLKEEDDLRHDGSYATCSYQH.

The LysM domain maps to 59–103 (IEHCLSPSDTLQGIALKYGVTMEQIKRANKLFSTDCIFLRKSLNI). The tract at residues 184-206 (AQRLKEEDDLRHDGSYATCSYQH) is disordered. Basic and acidic residues predominate over residues 186 to 197 (RLKEEDDLRHDG).

This Xenopus laevis (African clawed frog) protein is LysM and putative peptidoglycan-binding domain-containing protein 2 (lysmd2).